The following is a 344-amino-acid chain: Protein RecA (344 aa).

Residue 65–72 (GPESSGKT) coordinates ATP.

Belongs to the RecA family.

It localises to the cytoplasm. Can catalyze the hydrolysis of ATP in the presence of single-stranded DNA, the ATP-dependent uptake of single-stranded DNA by duplex DNA, and the ATP-dependent hybridization of homologous single-stranded DNAs. It interacts with LexA causing its activation and leading to its autocatalytic cleavage. The polypeptide is Protein RecA (Nitratiruptor sp. (strain SB155-2)).